The chain runs to 793 residues: Putative potassium transporter 12 (793 aa).

Residues Met-1–Ser-54 lie on the Cytoplasmic side of the membrane. Residues Leu-55–Pro-75 form a helical membrane-spanning segment. Residues His-76 to Ala-87 are Extracellular-facing. The chain crosses the membrane as a helical span at residues Leu-88 to Leu-108. At Arg-109–Leu-175 the chain is on the cytoplasmic side. The chain crosses the membrane as a helical span at residues Leu-176–Ile-196. Residues Ser-197 to Asp-215 lie on the Extracellular side of the membrane. Residues Val-216–Thr-236 form a helical membrane-spanning segment. Residues Asp-237–Lys-238 lie on the Cytoplasmic side of the membrane. A helical transmembrane segment spans residues Val-239 to Ala-259. The Extracellular portion of the chain corresponds to Leu-260 to Ser-289. N-linked (GlcNAc...) asparagine glycosylation is present at Asn-266. The chain crosses the membrane as a helical span at residues Trp-290–Leu-310. Over Cys-311 to Val-315 the chain is Cytoplasmic. Residues Leu-316–Ala-338 traverse the membrane as a helical segment. Over Ala-339–Thr-359 the chain is Extracellular. A helical membrane pass occupies residues Ile-360 to Ile-380. The Cytoplasmic portion of the chain corresponds to Ser-381–Gln-411. A helical membrane pass occupies residues Ile-412–Phe-432. The Extracellular segment spans residues Lys-433 to Thr-444. A glycan (N-linked (GlcNAc...) asparagine) is linked at Asn-434. The chain crosses the membrane as a helical span at residues Ala-445–Trp-465. Over Lys-466–His-468 the chain is Cytoplasmic. Residues Trp-469–Ala-489 traverse the membrane as a helical segment. Topologically, residues Cys-490–Gln-496 are extracellular. A helical membrane pass occupies residues Gly-497–Phe-517. Over Cys-518–Ile-793 the chain is Cytoplasmic.

It belongs to the HAK/KUP transporter (TC 2.A.72.3) family.

The protein resides in the membrane. High-affinity potassium transporter. The polypeptide is Putative potassium transporter 12 (HAK12) (Oryza sativa subsp. japonica (Rice)).